A 333-amino-acid chain; its full sequence is Trans-enoyl reductase apdC (333 aa).

Residue 45-48 coordinates NADP(+); it reads FDAK. 131 to 138 provides a ligand contact to substrate; that stretch reads VGLATVGM. Residues 167-170, Tyr-185, and 232-233 each bind NADP(+); these read SPHN and LD. Residue 252-256 participates in substrate binding; sequence SVTMY. 321-322 provides a ligand contact to NADP(+); that stretch reads VS.

The protein belongs to the zinc-containing alcohol dehydrogenase family. As to quaternary structure, monomer.

Its pathway is secondary metabolite biosynthesis. Its function is as follows. Trans-enoyl reductase; part of the gene cluster that mediates the biosynthesis of aspyridones. The polyketide-amino acid backbone preaspyridone A is first assembled by the PKS-NRPS hybrid apdA. The assembly of preaspyridone A is initiated by loading of malonyl-CoA onto apdA, followed by decarboxylation to yield the acetyl starter unit. The growing polyketide chain then elongates into a tetraketide. The adpA PKS module catalyzes three Claisen condensations, as well as beta-keto processing and methylation. Alpha-methylation step during polyketide synthesis is a prerequisite and a key checkpoint for chain transfer between PKS and NRPS modules. The downstream NRPS module contains the condensation (C), adenylation (A), and thiolation (T) domains and catalyzes the incorporation of tyrosine via the formation of the L-tyrosinyl-thioester and the amide linkage between L-tyrosinyl-thioester and the tetraketide. The bimodular assembly line is terminated with a reductase (R) domain that facilitates formation and release of the tetramic acid product. Because apdA lacks a designated enoylreductase (ER) domain, the required activity is provided the enoyl reductase apdC. ApdC appears to operate with different stereoselectivity in different PKS cycle. Combined with apdC, apdA is proposed to synthesize preaspyridone A via about 20 enzymatic steps. A number of oxidative steps performed successively by the cytochrome P450 monooxygenases apdE and apdB are required for the conversion of preaspyridone A to aspyridone A. The cytochrome P450 monooxygenase apdE is responsible for the oxidative dephenylation of preaspyridone A. Finally, the predicted FAD-dependent monooxygenase apdD and the acyl-CoA dehydrogenase apdG may be involved in the transformation of aspyridone A into aspyridone B. This is Trans-enoyl reductase apdC from Emericella nidulans (strain FGSC A4 / ATCC 38163 / CBS 112.46 / NRRL 194 / M139) (Aspergillus nidulans).